The following is a 284-amino-acid chain: Bifunctional protein FolD (284 aa).

NADP(+)-binding positions include 166–168 and Ile232; that span reads GAS.

The protein belongs to the tetrahydrofolate dehydrogenase/cyclohydrolase family. As to quaternary structure, homodimer.

It carries out the reaction (6R)-5,10-methylene-5,6,7,8-tetrahydrofolate + NADP(+) = (6R)-5,10-methenyltetrahydrofolate + NADPH. The catalysed reaction is (6R)-5,10-methenyltetrahydrofolate + H2O = (6R)-10-formyltetrahydrofolate + H(+). It participates in one-carbon metabolism; tetrahydrofolate interconversion. In terms of biological role, catalyzes the oxidation of 5,10-methylenetetrahydrofolate to 5,10-methenyltetrahydrofolate and then the hydrolysis of 5,10-methenyltetrahydrofolate to 10-formyltetrahydrofolate. The sequence is that of Bifunctional protein FolD from Glaesserella parasuis serovar 5 (strain SH0165) (Haemophilus parasuis).